Consider the following 189-residue polypeptide: Putative manganese efflux pump MntP (189 aa).

A run of 6 helical transmembrane segments spans residues 3–23, 41–61, 65–85, 104–124, 132–152, and 167–187; these read LSATIILAFAMSMDAFAASIG, LIFGVIEAITPLIGWCIGLFA, IMEWDHWIAFSLLFILGCRMI, FWVLVTTAIATSLDAMAIGVG, IVHTAMAIGLATMIMATLGML, and IIGGIVLIGIGFNILYEHMHL.

This sequence belongs to the MntP (TC 9.B.29) family.

Its subcellular location is the cell inner membrane. Its function is as follows. Probably functions as a manganese efflux pump. This chain is Putative manganese efflux pump MntP, found in Yersinia pseudotuberculosis serotype O:1b (strain IP 31758).